The following is an 889-amino-acid chain: Cytoplasmic aconitate hydratase (889 aa).

Substrate is bound by residues Gln-86 and 205 to 207; that span reads DSH. [4Fe-4S] cluster-binding residues include Cys-437, Cys-503, and Cys-506. Substrate contacts are provided by residues Arg-536, Arg-541, Arg-699, and 779–780; that span reads SR.

The protein belongs to the aconitase/IPM isomerase family. Interacts (when associated with the 4Fe-4S) with FBXL5. Interacts with frataxin(81-210). The cofactor is [4Fe-4S] cluster.

It localises to the cytoplasm. The protein localises to the cytosol. It carries out the reaction citrate = D-threo-isocitrate. Bifunctional iron sensor that switches between 2 activities depending on iron availability. Iron deprivation, promotes its mRNA binding activity through which it regulates the expression of genes involved in iron uptake, sequestration and utilization. Binds to iron-responsive elements (IRES) in the untranslated region of target mRNAs preventing for instance the translation of ferritin and aminolevulinic acid synthase and stabilizing the transferrin receptor mRNA. In terms of biological role, conversely, when cellular iron levels are high, binds a 4Fe-4S cluster which precludes RNA binding activity and promotes the aconitase activity, the isomerization of citrate to isocitrate via cis-aconitate. The sequence is that of Cytoplasmic aconitate hydratase (ACO1) from Bos taurus (Bovine).